The sequence spans 245 residues: tRNA pseudouridine synthase A (245 aa).

Residue Asp52 is the Nucleophile of the active site. Substrate is bound at residue Tyr111.

The protein belongs to the tRNA pseudouridine synthase TruA family. In terms of assembly, homodimer.

The enzyme catalyses uridine(38/39/40) in tRNA = pseudouridine(38/39/40) in tRNA. Formation of pseudouridine at positions 38, 39 and 40 in the anticodon stem and loop of transfer RNAs. In Rickettsia rickettsii (strain Iowa), this protein is tRNA pseudouridine synthase A.